The chain runs to 141 residues: Cholinesterase (141 aa).

N-linked (GlcNAc...) asparagine glycosylation is present at asparagine 39. 49-50 (GG) is a binding site for substrate. Serine 131 functions as the Acyl-ester intermediate in the catalytic mechanism. The residue at position 131 (serine 131) is a Phosphoserine.

This sequence belongs to the type-B carboxylesterase/lipase family. Homotetramer; disulfide-linked. Dimer of dimers. As to expression, present in most cells except erythrocytes.

Its subcellular location is the secreted. The enzyme catalyses an acylcholine + H2O = a carboxylate + choline + H(+). Functionally, esterase with broad substrate specificity. Contributes to the inactivation of the neurotransmitter acetylcholine. Can degrade neurotoxic organophosphate esters. This Sus scrofa (Pig) protein is Cholinesterase (BCHE).